A 995-amino-acid polypeptide reads, in one-letter code: DExH-box ATP-dependent RNA helicase DExH1 (995 aa).

2 disordered regions span residues 1-42 and 156-192; these read MPPH…EQRW and KTTQESGSSGASASAFNDQQDRTSTLGLKRPDSASKL. Residues 25 to 37 are compositionally biased toward gly residues; the sequence is RGGGGRGGGGGGR. The segment covering 161–170 has biased composition (low complexity); sequence SGSSGASASA. A compositionally biased stretch (polar residues) spans 171–181; it reads FNDQQDRTSTL. A Helicase ATP-binding domain is found at 238 to 405; it reads LNSVSQNQVL…FGNSPTMHIP (168 aa). 251-258 is an ATP binding site; that stretch reads GETGCGKT. The DEIH box signature appears at 352 to 355; the sequence is DEIH. A disordered region spans residues 429 to 450; the sequence is SSDSGNYQGSSRGRRRESESKK. In terms of domain architecture, Helicase C-terminal spans 484-663; it reads QIDVDLVEAT…ELCLHIKSLQ (180 aa).

The protein belongs to the DExH box helicase family.

The catalysed reaction is ATP + H2O = ADP + phosphate + H(+). This Arabidopsis thaliana (Mouse-ear cress) protein is DExH-box ATP-dependent RNA helicase DExH1.